Consider the following 218-residue polypeptide: MICIPVIDENVCDAINSAKEALKYGDIVEFRVDLLKDVTFEDIEEFSKVPSIITIRAEWEGGNWKKSDNERIELLKHAIKNNAKFVDIELKEERNLELVKYRNESNSNTKIIISYHDFEKTPEIDELIEVVEKELKIGDIAKFATFAHSKEDTLKILNLMNKYAGKIIAIGMGESGKLTRILGLDFGSILTFASMEGKASAPGQVDVKKLKEILKLIG.

3-dehydroquinate-binding positions include 29 to 31 (EFR) and R56. H116 functions as the Proton donor/acceptor in the catalytic mechanism. The Schiff-base intermediate with substrate role is filled by K142. The 3-dehydroquinate site is built by R180, S200, and Q204.

The protein belongs to the type-I 3-dehydroquinase family. As to quaternary structure, homodimer.

The catalysed reaction is 3-dehydroquinate = 3-dehydroshikimate + H2O. It functions in the pathway metabolic intermediate biosynthesis; chorismate biosynthesis; chorismate from D-erythrose 4-phosphate and phosphoenolpyruvate: step 3/7. Functionally, involved in the third step of the chorismate pathway, which leads to the biosynthesis of aromatic amino acids. Catalyzes the cis-dehydration of 3-dehydroquinate (DHQ) and introduces the first double bond of the aromatic ring to yield 3-dehydroshikimate. In Methanococcus maripaludis (strain C7 / ATCC BAA-1331), this protein is 3-dehydroquinate dehydratase.